The primary structure comprises 150 residues: SsrA-binding protein (150 aa).

The protein belongs to the SmpB family.

It localises to the cytoplasm. Required for rescue of stalled ribosomes mediated by trans-translation. Binds to transfer-messenger RNA (tmRNA), required for stable association of tmRNA with ribosomes. tmRNA and SmpB together mimic tRNA shape, replacing the anticodon stem-loop with SmpB. tmRNA is encoded by the ssrA gene; the 2 termini fold to resemble tRNA(Ala) and it encodes a 'tag peptide', a short internal open reading frame. During trans-translation Ala-aminoacylated tmRNA acts like a tRNA, entering the A-site of stalled ribosomes, displacing the stalled mRNA. The ribosome then switches to translate the ORF on the tmRNA; the nascent peptide is terminated with the 'tag peptide' encoded by the tmRNA and targeted for degradation. The ribosome is freed to recommence translation, which seems to be the essential function of trans-translation. The chain is SsrA-binding protein from Campylobacter jejuni subsp. doylei (strain ATCC BAA-1458 / RM4099 / 269.97).